Here is a 327-residue protein sequence, read N- to C-terminus: Acyl-CoA desaturase (327 aa).

Residues Met1 to Val39 lie on the Cytoplasmic side of the membrane. The chain crosses the membrane as a helical span at residues Trp40–Phe60. A substrate-binding site is contributed by Asn42. Residues Pro61–Arg64 lie on the Lumenal side of the membrane. The chain crosses the membrane as a helical span at residues Ala65–Gly85. At Ala86–Phe184 the chain is on the cytoplasmic side. Fe cation contacts are provided by His87 and His92. The short motif at His87 to His92 is the Histidine box-1 element. Substrate contacts are provided by Asn115, Arg122, and Asp123. 3 residues coordinate Fe cation: His124, His127, and His128. Residues His124 to His128 carry the Histidine box-2 motif. Arg155 and Lys156 together coordinate substrate. A helical membrane pass occupies residues Tyr185–Val204. At Trp205–Ser208 the chain is on the lumenal side. Residues Leu209–Leu230 form a helical membrane-spanning segment. Trp229 contributes to the substrate binding site. The Cytoplasmic portion of the chain corresponds to Val231–Gly327. Fe cation-binding residues include His236, His265, His268, and His269. The Histidine box-3 motif lies at His265–His269.

Belongs to the fatty acid desaturase type 1 family. Fe(2+) serves as cofactor.

The protein resides in the endoplasmic reticulum membrane. It carries out the reaction octadecanoyl-CoA + 2 Fe(II)-[cytochrome b5] + O2 + 2 H(+) = (9Z)-octadecenoyl-CoA + 2 Fe(III)-[cytochrome b5] + 2 H2O. Stearoyl-CoA desaturase that utilizes O(2) and electrons from reduced cytochrome b5 to introduce the first double bond into saturated fatty acyl-CoA substrates. Has high specificity and catalyzes the insertion of a cis double bond at the delta-9 position into fatty acyl-CoA substrates including palmitoyl-CoA and stearoyl-CoA. Contributes to the biosynthesis of membrane phospholipids, cholesterol esters and triglycerides. In Cyprinus carpio (Common carp), this protein is Acyl-CoA desaturase.